We begin with the raw amino-acid sequence, 152 residues long: tRNA-specific adenosine deaminase (152 aa).

Residues 2–111 enclose the CMP/dCMP-type deaminase domain; that stretch reads AERTHFMELA…AQDPKGGAVE (110 aa). H53 contacts Zn(2+). Catalysis depends on E55, which acts as the Proton donor. Positions 83 and 86 each coordinate Zn(2+).

Belongs to the cytidine and deoxycytidylate deaminase family. In terms of assembly, homodimer. The cofactor is Zn(2+).

The catalysed reaction is adenosine(34) in tRNA + H2O + H(+) = inosine(34) in tRNA + NH4(+). In terms of biological role, catalyzes the deamination of adenosine to inosine at the wobble position 34 of tRNA(Arg2). This is tRNA-specific adenosine deaminase from Agrobacterium fabrum (strain C58 / ATCC 33970) (Agrobacterium tumefaciens (strain C58)).